A 233-amino-acid chain; its full sequence is Outer membrane protein MIP (233 aa).

The first 20 residues, 1–20 (MKMKLVTAAIMGLAMSTAMA), serve as a signal peptide directing secretion. Residues 144–233 (SDTVTVEYTG…IHLISVKKAA (90 aa)) enclose the PPIase FKBP-type domain.

The protein belongs to the FKBP-type PPIase family.

It is found in the cell outer membrane. It carries out the reaction [protein]-peptidylproline (omega=180) = [protein]-peptidylproline (omega=0). Strongly inhibited by FK506 but is completely resistant to cyclosporin A. Its function is as follows. Essential virulence factor associated with macrophage infectivity. Exhibits PPIase activity. This is Outer membrane protein MIP (mip) from Legionella longbeachae.